Here is a 481-residue protein sequence, read N- to C-terminus: Glutamyl-tRNA(Gln) amidotransferase subunit A (481 aa).

Residues Lys-76 and Ser-151 each act as charge relay system in the active site. Ser-175 serves as the catalytic Acyl-ester intermediate.

Belongs to the amidase family. GatA subfamily. In terms of assembly, heterotrimer of A, B and C subunits.

The catalysed reaction is L-glutamyl-tRNA(Gln) + L-glutamine + ATP + H2O = L-glutaminyl-tRNA(Gln) + L-glutamate + ADP + phosphate + H(+). Its function is as follows. Allows the formation of correctly charged Gln-tRNA(Gln) through the transamidation of misacylated Glu-tRNA(Gln) in organisms which lack glutaminyl-tRNA synthetase. The reaction takes place in the presence of glutamine and ATP through an activated gamma-phospho-Glu-tRNA(Gln). This chain is Glutamyl-tRNA(Gln) amidotransferase subunit A, found in Chlorobaculum tepidum (strain ATCC 49652 / DSM 12025 / NBRC 103806 / TLS) (Chlorobium tepidum).